The sequence spans 291 residues: Ribosomal RNA small subunit methyltransferase H (291 aa).

S-adenosyl-L-methionine contacts are provided by residues 36-38 (GGH), D55, L88, D102, and Q109. The tract at residues 268–291 (KPTQEETKNNPRARSAKLRVAERI) is disordered.

The protein belongs to the methyltransferase superfamily. RsmH family.

The protein localises to the cytoplasm. The enzyme catalyses cytidine(1402) in 16S rRNA + S-adenosyl-L-methionine = N(4)-methylcytidine(1402) in 16S rRNA + S-adenosyl-L-homocysteine + H(+). Functionally, specifically methylates the N4 position of cytidine in position 1402 (C1402) of 16S rRNA. The protein is Ribosomal RNA small subunit methyltransferase H of Thermosipho melanesiensis (strain DSM 12029 / CIP 104789 / BI429).